The sequence spans 404 residues: Argininosuccinate synthase (404 aa).

9-17 is a binding site for ATP; it reads AYSGGLDTS. Tyrosine 86 contacts L-citrulline. Position 116 (glycine 116) interacts with ATP. L-aspartate is bound by residues threonine 118, asparagine 122, and aspartate 123. Residue asparagine 122 coordinates L-citrulline. Residues arginine 126, serine 174, serine 183, glutamate 259, and tyrosine 271 each coordinate L-citrulline.

The protein belongs to the argininosuccinate synthase family. Type 1 subfamily. In terms of assembly, homotetramer.

The protein resides in the cytoplasm. It carries out the reaction L-citrulline + L-aspartate + ATP = 2-(N(omega)-L-arginino)succinate + AMP + diphosphate + H(+). It functions in the pathway amino-acid biosynthesis; L-arginine biosynthesis; L-arginine from L-ornithine and carbamoyl phosphate: step 2/3. This chain is Argininosuccinate synthase, found in Listeria innocua serovar 6a (strain ATCC BAA-680 / CLIP 11262).